Here is a 422-residue protein sequence, read N- to C-terminus: Histidine--tRNA ligase (422 aa).

Belongs to the class-II aminoacyl-tRNA synthetase family. In terms of assembly, homodimer.

It localises to the cytoplasm. The catalysed reaction is tRNA(His) + L-histidine + ATP = L-histidyl-tRNA(His) + AMP + diphosphate + H(+). The sequence is that of Histidine--tRNA ligase from Vibrio campbellii (strain ATCC BAA-1116).